Consider the following 100-residue polypeptide: Large ribosomal subunit protein uL23 (100 aa).

It belongs to the universal ribosomal protein uL23 family. Part of the 50S ribosomal subunit. Contacts protein L29, and trigger factor when it is bound to the ribosome.

Functionally, one of the early assembly proteins it binds 23S rRNA. One of the proteins that surrounds the polypeptide exit tunnel on the outside of the ribosome. Forms the main docking site for trigger factor binding to the ribosome. This Photorhabdus laumondii subsp. laumondii (strain DSM 15139 / CIP 105565 / TT01) (Photorhabdus luminescens subsp. laumondii) protein is Large ribosomal subunit protein uL23.